The primary structure comprises 96 residues: MSAITRHGDALVIRLYIQPKASRDQIVGLHGDELKVAITAPPVDGQANAHLTKFLAKQFRVAKSLVVIEKGELGRHKQIRITHPQHIPADVAEFIE.

It belongs to the UPF0235 family.

The sequence is that of UPF0235 protein ECA3630 from Pectobacterium atrosepticum (strain SCRI 1043 / ATCC BAA-672) (Erwinia carotovora subsp. atroseptica).